Here is a 375-residue protein sequence, read N- to C-terminus: Queuine tRNA-ribosyltransferase (375 aa).

The Proton acceptor role is filled by aspartate 89. Substrate contacts are provided by residues 89-93 (DSGGF), aspartate 143, glutamine 187, and glycine 214. The tract at residues 245-251 (GVGKPED) is RNA binding. Aspartate 264 (nucleophile) is an active-site residue. The interval 269–273 (TRNAR) is RNA binding; important for wobble base 34 recognition. 4 residues coordinate Zn(2+): cysteine 302, cysteine 304, cysteine 307, and histidine 333.

It belongs to the queuine tRNA-ribosyltransferase family. Homodimer. Within each dimer, one monomer is responsible for RNA recognition and catalysis, while the other monomer binds to the replacement base PreQ1. It depends on Zn(2+) as a cofactor.

The enzyme catalyses 7-aminomethyl-7-carbaguanine + guanosine(34) in tRNA = 7-aminomethyl-7-carbaguanosine(34) in tRNA + guanine. The protein operates within tRNA modification; tRNA-queuosine biosynthesis. In terms of biological role, catalyzes the base-exchange of a guanine (G) residue with the queuine precursor 7-aminomethyl-7-deazaguanine (PreQ1) at position 34 (anticodon wobble position) in tRNAs with GU(N) anticodons (tRNA-Asp, -Asn, -His and -Tyr). Catalysis occurs through a double-displacement mechanism. The nucleophile active site attacks the C1' of nucleotide 34 to detach the guanine base from the RNA, forming a covalent enzyme-RNA intermediate. The proton acceptor active site deprotonates the incoming PreQ1, allowing a nucleophilic attack on the C1' of the ribose to form the product. After dissociation, two additional enzymatic reactions on the tRNA convert PreQ1 to queuine (Q), resulting in the hypermodified nucleoside queuosine (7-(((4,5-cis-dihydroxy-2-cyclopenten-1-yl)amino)methyl)-7-deazaguanosine). This is Queuine tRNA-ribosyltransferase from Citrobacter koseri (strain ATCC BAA-895 / CDC 4225-83 / SGSC4696).